A 94-amino-acid chain; its full sequence is Integration host factor subunit beta (94 aa).

The protein belongs to the bacterial histone-like protein family. As to quaternary structure, heterodimer of an alpha and a beta chain.

Its function is as follows. This protein is one of the two subunits of integration host factor, a specific DNA-binding protein that functions in genetic recombination as well as in transcriptional and translational control. The protein is Integration host factor subunit beta of Haemophilus influenzae (strain 86-028NP).